The primary structure comprises 193 residues: Adenine phosphoribosyltransferase (193 aa).

This sequence belongs to the purine/pyrimidine phosphoribosyltransferase family. Homodimer.

Its subcellular location is the cytoplasm. The enzyme catalyses AMP + diphosphate = 5-phospho-alpha-D-ribose 1-diphosphate + adenine. It participates in purine metabolism; AMP biosynthesis via salvage pathway; AMP from adenine: step 1/1. In terms of biological role, catalyzes a salvage reaction resulting in the formation of AMP, that is energically less costly than de novo synthesis. The protein is Adenine phosphoribosyltransferase of Chromobacterium violaceum (strain ATCC 12472 / DSM 30191 / JCM 1249 / CCUG 213 / NBRC 12614 / NCIMB 9131 / NCTC 9757 / MK).